The chain runs to 797 residues: Striatin-3 (797 aa).

Met-1 bears the N-acetylmethionine mark. Composition is skewed to gly residues over residues 1 to 13 (MDELAGGGGGGPG) and 23 to 43 (GPGGNLGLSPGGNGAAGGGGP). Residues 1–60 (MDELAGGGGGGPGMAAPPRQQQGPGGNLGLSPGGNGAAGGGGPPASEGAGPAAGPELSRP) are disordered. The segment covering 44–56 (PASEGAGPAAGPE) has biased composition (low complexity). The interval 71–79 (YIQHEWARF) is caveolin-binding. The stretch at 77–136 (ARFEMERAHWEVERAELQARIAFLQGERKGQENLKKDLVRRIKMLEYALKQERAKYHKLK) forms a coiled coil. At Thr-150 the chain carries Phosphothreonine. The calmodulin-binding stretch occupies residues 166–183 (QNSQLTWKQGRQLLRQYL). 3 positions are modified to phosphoserine: Ser-202, Ser-214, and Ser-229. 2 disordered regions span residues 224–278 (LNGG…KHRM) and 313–338 (DGEGAGEARSSGDGTEWDKDDLSPTA). Basic and acidic residues predominate over residues 230–241 (PKQKGQEIKRSS). The span at 253-265 (NADDSDEDEENDM) shows a compositional bias: acidic residues. 2 positions are modified to phosphoserine: Ser-257 and Ser-335. WD repeat units follow at residues 478–517 (SHFDGVRALAFHPVEPVLVTASEDHTLKLWNLQKTVPAKK), 531–570 (AHIGPVLSLAISSNGEQCFSGGIDATIQWWNMPSPSVDPY), 584–623 (GHTDAVWGLAYSGIKNQLLSCSADGTVRLWNPQEKLPCIC), 679–718 (QSNNHINRVVSHPTLPVTITAHEDRHIKFFDNKTGKMIHS), 721–760 (AHLDAVTSLAVDPNGIYLMSGSHDCSIRLWNLDSKTCVQE), and 767–797 (KLDESIYDVAFHSSKAYIASAGADALAKVFV).

Belongs to the WD repeat striatin family. In terms of assembly, tetramerizes. Part of the core of STRIPAK complexes composed of PP2A catalytic and scaffolding subunits, the striatins (PP2A regulatory subunits), the striatin-associated proteins MOB4, STRIP1 and STRIP2, PDCD10 and members of the STE20 kinases, such as STK24 and STK26. The STRIPAK complex can be extended by adapter proteins such as SLMAP:SIKE1 or CTTNBP2NL. Interacts with CDC42BPB.

The protein localises to the cytoplasm. It is found in the membrane. In terms of biological role, calmodulin-binding scaffolding protein which is the center of the striatin-interacting phosphatase and kinase (STRIPAK) complexes. STRIPAK complexes have critical roles in protein (de)phosphorylation and are regulators of multiple signaling pathways including Hippo, MAPK, nuclear receptor and cytoskeleton remodeling. Different types of STRIPAK complexes are involved in a variety of biological processes such as cell growth, differentiation, apoptosis, metabolism and immune regulation. This chain is Striatin-3, found in Homo sapiens (Human).